We begin with the raw amino-acid sequence, 635 residues long: Chaperone protein DnaK (635 aa).

Threonine 198 bears the Phosphothreonine; by autocatalysis mark. The disordered stretch occupies residues 606 to 635 (QATAASPGAEAPKADDDVVDAEFSEVDENK). The segment covering 622 to 635 (DVVDAEFSEVDENK) has biased composition (acidic residues).

This sequence belongs to the heat shock protein 70 family.

Functionally, acts as a chaperone. The sequence is that of Chaperone protein DnaK from Novosphingobium aromaticivorans (strain ATCC 700278 / DSM 12444 / CCUG 56034 / CIP 105152 / NBRC 16084 / F199).